Reading from the N-terminus, the 110-residue chain is uncharacterized protein (110 aa).

This is an uncharacterized protein from Acidianus convivator (ABV).